The primary structure comprises 1462 residues: MSTVVNRRSSHQFDSPSNHLDHSSSMNVDKVVQSVTNATKRLSQISTNTNNSNKKRKTQNKIGPWKLGRTLGRGSTGRVRLAKNTTTGQLAAVKIVPKSNFKKLENPKYKRSKEDATRLPYGIEREIIIMKLISHPNIMGLYDVWENKNDLYLILEYIEGGELFDYLIKRGKLQEYEAINYFKQIINGINYLHQFNICHRDLKPENLLLDFNKNIKIADFGMAALEVKEKLLETSCGSPHYASPEIVAGKNYHGAPSDIWSCGIILFALLTGHLPFDDENIRKLLLKVQSGKFNMPPELSFEAKDLITKMLKVNPRERITIDAILTHPLLAKYPEPTVSYSSTTTLDINSINIKQIESVDKIDKEILKNLSVLFHNCDEKTIISRLLSPNRCPEKMFYYLLMKYRNEHLSNSNSFNSSNDVDSARSLPRSTSYVKTTVTDHATGEKHTTVKKIQQSSSIYSNRSLLKKSTSAKGNVLSNITNRPNTPKQFSASSSFNKKKALHSKTQIYASRSRNASSRSLKSNSSTGRNGNNASVTSVNKIPEITGATVLQPIPSMAMNRGDEQQNKTKKNLTGTFGNKSLLNFQLICEEVFENDKENSKPVSKTPVSQLPPPPPPPIETPTSRTNSVKRGKTWSLARRERELAEQVRQRNEARENKLKAEELARKELEQEKKRIAEEKKRLEQQERELDEKQKLQEKQKAALEKLQKHQSAHDFEGLFASNRRSVTDMAPSSGMSSLDPRAHMVSRANTIGSPNLSSSSVNIDENASKVLHKFGIDVAPSPKRFSRASKTSTSKNLSSFLAPTVSRNLSSQLKTSSSKNLAGYLHGTTDTNGSAIAAKKKDNSTNKALTIEEFNAKERTSMSPSISKASVNKRNSNQSSYYRSMFSDNGNDDNVTKVRTRESHLSVQEEEEMDMENAIDEDISLIPNPRFSRFSFGGLLGSNTVANEEGDWTIMNSTLNHSNTVVRRTHNKSSTMLGLGIKMRDTTTIKEDEEFEDEKPFISVPSSEDDEGNTHKNKRGGLRDSGNYDFDEEHSVASTANTEYSDVASQGQQRPGSHTIHQLETELSNFDLLSYRVADIGKVNKHKPSIVDSKETLLKNHSSDEATIEVKEDNNEHDFNDKIKQHYDDNGDSEEDDEDEDEEEEDDDDDDDARSSFEARPHSHNYSLAEITSESPVGGGYESPSIANDFKKSRHSTGIFSTTQFPRSPYVVNNNGDSNKDENSQQQTKHMLNDGHKGLITSPVQDTFGSKKPVESNSLFRRLSLNPNRAAPKAPAPPPPSAPTSSAAKANISQPLSSPTKGHNRFSRISIGSKNMLQKEDKSTKSNWFKKFFHSLTTPSTKEQSGNSSSKVASKDIKIIDTSLTAAQLIRVIKYQLELKKIEGSISKVDIDEEFGLISGVIPSKFANGRKLKFKIEVIDLINSSSLHVIKMKGNDKGFQSLVNIVTFIIKKEEQDKICRR.

2 disordered regions span residues 1 to 26 and 41 to 69; these read MSTVVNRRSSHQFDSPSNHLDHSSSM and RLSQISTNTNNSNKKRKTQNKIGPWKLGR. One can recognise a Protein kinase domain in the interval 65–330; that stretch reads WKLGRTLGRG…IDAILTHPLL (266 aa). Residues 71 to 79 and lysine 94 contribute to the ATP site; that span reads LGRGSTGRV. The active-site Proton acceptor is aspartate 201. Disordered stretches follow at residues 412–450, 471–540, 598–637, 992–1031, 1095–1230, and 1269–1321; these read SNSFNSSNDVDSARSLPRSTSYVKTTVTDHATGEKHTTV, SAKG…TSVN, ENSKPVSKTPVSQLPPPPPPPIETPTSRTNSVKRGKTWSL, EDEEFEDEKPFISVPSSEDDEGNTHKNKRGGLRDSGNYDF, KETL…QQTK, and NRAA…LQKE. 2 stretches are compositionally biased toward polar residues: residues 428–440 and 471–487; these read PRSTSYVKTTVTD and SAKGNVLSNITNRPNTP. Over residues 510-526 the composition is skewed to low complexity; it reads ASRSRNASSRSLKSNSS. Residues 527–540 are compositionally biased toward polar residues; the sequence is TGRNGNNASVTSVN. Pro residues predominate over residues 610–620; that stretch reads QLPPPPPPPIE. A coiled-coil region spans residues 636-715; it reads SLARRERELA…KLQKHQSAHD (80 aa). The segment covering 1095–1130 has biased composition (basic and acidic residues); the sequence is KETLLKNHSSDEATIEVKEDNNEHDFNDKIKQHYDD. The segment covering 1131 to 1153 has biased composition (acidic residues); sequence NGDSEEDDEDEDEEEEDDDDDDD. Composition is skewed to polar residues over residues 1165–1176, 1197–1218, and 1292–1302; these read HNYSLAEITSES, STGIFSTTQFPRSPYVVNNNGD, and NISQPLSSPTK.

The protein belongs to the protein kinase superfamily. CAMK Ser/Thr protein kinase family. NIM1 subfamily. In terms of processing, phosphorylated throughout the cell cycle, except for the G1 phase.

Its subcellular location is the bud neck. The enzyme catalyses L-seryl-[protein] + ATP = O-phospho-L-seryl-[protein] + ADP + H(+). It carries out the reaction L-threonyl-[protein] + ATP = O-phospho-L-threonyl-[protein] + ADP + H(+). Functionally, protein kinase involved in determination of morphology during the cell cycle of both yeast-form and hyphal cells via regulation of SWE1 and CDC28. Regulates pseudohypha formation, but is not required for septin ring organization or septum formation. Plays an essential role in virulence in a mouse model. The chain is Serine/threonine-protein kinase HSL1 (HSL1) from Candida albicans (strain SC5314 / ATCC MYA-2876) (Yeast).